Consider the following 338-residue polypeptide: tRNA N6-adenosine threonylcarbamoyltransferase (338 aa).

Residues H111 and H115 each coordinate Fe cation. Residues 134-138 (LVSGG), D167, G180, and N272 contribute to the substrate site. Residue D300 participates in Fe cation binding.

Belongs to the KAE1 / TsaD family. The cofactor is Fe(2+).

It localises to the cytoplasm. The catalysed reaction is L-threonylcarbamoyladenylate + adenosine(37) in tRNA = N(6)-L-threonylcarbamoyladenosine(37) in tRNA + AMP + H(+). Required for the formation of a threonylcarbamoyl group on adenosine at position 37 (t(6)A37) in tRNAs that read codons beginning with adenine. Is involved in the transfer of the threonylcarbamoyl moiety of threonylcarbamoyl-AMP (TC-AMP) to the N6 group of A37, together with TsaE and TsaB. TsaD likely plays a direct catalytic role in this reaction. The sequence is that of tRNA N6-adenosine threonylcarbamoyltransferase from Vibrio atlanticus (strain LGP32) (Vibrio splendidus (strain Mel32)).